The chain runs to 123 residues: UPF0102 protein Pcar_2217 (123 aa).

This sequence belongs to the UPF0102 family.

This is UPF0102 protein Pcar_2217 from Syntrophotalea carbinolica (strain DSM 2380 / NBRC 103641 / GraBd1) (Pelobacter carbinolicus).